A 38-amino-acid polypeptide reads, in one-letter code: Putative defensin-like protein 105 (38 aa).

3 disulfide bridges follow: Cys-5/Cys-27, Cys-13/Cys-33, and Cys-17/Cys-34.

This sequence belongs to the DEFL family.

The sequence is that of Putative defensin-like protein 105 from Arabidopsis thaliana (Mouse-ear cress).